The chain runs to 502 residues: Maturase K (502 aa).

Belongs to the intron maturase 2 family. MatK subfamily.

Its subcellular location is the plastid. It localises to the chloroplast. Its function is as follows. Usually encoded in the trnK tRNA gene intron. Probably assists in splicing its own and other chloroplast group II introns. The protein is Maturase K of Brassica oleracea (Wild cabbage).